A 261-amino-acid polypeptide reads, in one-letter code: Adenosylcobinamide-GDP ribazoletransferase (261 aa).

5 helical membrane passes run 12–32 (NLFFVAMSFFTRIPVPSWVVI), 46–66 (LVGLLIGLICALVFWLAQLIL), 67–87 (PASIAILLAMVAGVLVTGAFH), 120–140 (GALSLGLVLLLKWQLLVELAL), and 199–219 (IFVLLWLNGVAAFVLFITLWL).

It belongs to the CobS family. Mg(2+) serves as cofactor.

It is found in the cell inner membrane. The catalysed reaction is alpha-ribazole + adenosylcob(III)inamide-GDP = adenosylcob(III)alamin + GMP + H(+). It catalyses the reaction alpha-ribazole 5'-phosphate + adenosylcob(III)inamide-GDP = adenosylcob(III)alamin 5'-phosphate + GMP + H(+). It participates in cofactor biosynthesis; adenosylcobalamin biosynthesis; adenosylcobalamin from cob(II)yrinate a,c-diamide: step 7/7. In terms of biological role, joins adenosylcobinamide-GDP and alpha-ribazole to generate adenosylcobalamin (Ado-cobalamin). Also synthesizes adenosylcobalamin 5'-phosphate from adenosylcobinamide-GDP and alpha-ribazole 5'-phosphate. This is Adenosylcobinamide-GDP ribazoletransferase from Shewanella frigidimarina (strain NCIMB 400).